A 362-amino-acid polypeptide reads, in one-letter code: Malate dehydrogenase (362 aa).

Belongs to the LDH2/MDH2 oxidoreductase family. As to quaternary structure, homodimer.

Its subcellular location is the cytoplasm. The enzyme catalyses (S)-malate + NAD(+) = oxaloacetate + NADH + H(+). In Pyrococcus abyssi (strain GE5 / Orsay), this protein is Malate dehydrogenase (mdh).